A 94-amino-acid polypeptide reads, in one-letter code: Acylphosphatase (94 aa).

Residues 3–90 form the Acylphosphatase-like domain; it reads RVHVIVEGRV…PDEKQFRIMY (88 aa). Catalysis depends on residues Arg-18 and Asn-36.

Belongs to the acylphosphatase family.

The enzyme catalyses an acyl phosphate + H2O = a carboxylate + phosphate + H(+). The protein is Acylphosphatase (acyP) of Geobacillus thermodenitrificans (strain NG80-2).